A 31-amino-acid chain; its full sequence is Nemertide alpha-4 (31 aa).

Disulfide bonds link C2–C16, C9–C20, and C15–C26. A 4-hydroxyproline mark is found at P28 and P29.

It belongs to the nemertide family. Confined to the epidermis and to the mucus layer.

It localises to the secreted. In terms of biological role, potent toxin, demonstrating strong inhibitory effects on insect sodium channels (Nav) and reduced activity on mammalian sodium channels. Potently inhibits inactivation of insect sodium channels of B.germanica (BgNav1) (EC(50)=11.1 nM). Also delays the inactivation of most mammalian Nav (human Nav1.1/SCN1A; EC(50)=92 nM, rat Nav1.2/SCN2A; EC(50)=134.2 nM, rat Nav1.3/SCN3A; EC(50)=12.9 nM, rat Nav1.4/SCN4A; EC(50)=14.6 nM, human Nav1.5/SCN5A; EC(50)=27.8 nM, mouse Nav1.6/SCN8A; EC(50)=123.6 nM, human Nav1.9/SCN9A; EC(50)=80.5 nM). Inactivation is completely prevented by a concentration of 1 uM, resulting in sustained, non-inactivating currents. In addition, the toxin significantly enhances the recovery from inactivation, and the open state is not required for the toxin to interact with the channel. In vivo, injection into brine shrimp (Artemia salina) stops movement or causes death after 24 hours (EC(50)=0.4 uM). The protein is Nemertide alpha-4 of Lineus sanguineus (Ribbon worm).